The chain runs to 441 residues: MHNPQHYMTGFGNEFATEAVAGSLPVGQNSPQRVAHGLYAEQLSGTAFTAPRGENRRSWLYRIRPAAVHGRFSLIEQSRLHNDFGGGPVPPDQMRWSPLPLPATPTDFVDGLYTMAGNGSPEAMTGVAVHLYAANASMHGRFFYNADGELLLVPQLGRLRVCTELGVLELEPQQIGVIPRGVRFRVELLDSAARGYVCENFGGLLRLPDLGPIGANGLANPRDFETPRAAFEQRDGAFELVAKFQGHLWRADIDHSPLDVVAWHGNYAPYRYDLRRFNTIGSISFDHPDPSIFTVLTSPSDTHGTANMDFAIFPPRWLVAQHTFRPPWFHRNVASEFMGLVHGVYDAKAEGFAPGGASLHNCMSGHGPDAATFDKASQADLTRPDVIAETMAFMFETRAVLRPTQQALSAAHRQADYQQCWSGLRAAFQHPPAKNTTSVLR.

His-287 (proton acceptor) is an active-site residue. Residues His-330 and Glu-336 each coordinate Fe cation. Tyr-345 and His-366 together coordinate homogentisate. His-366 is a binding site for Fe cation.

Belongs to the homogentisate dioxygenase family. In terms of assembly, hexamer; dimer of trimers. Requires Fe cation as cofactor.

The enzyme catalyses homogentisate + O2 = 4-maleylacetoacetate + H(+). The protein operates within amino-acid degradation; L-phenylalanine degradation; acetoacetate and fumarate from L-phenylalanine: step 4/6. In terms of biological role, involved in the catabolism of homogentisate (2,5-dihydroxyphenylacetate or 2,5-OH-PhAc), a central intermediate in the degradation of phenylalanine and tyrosine. Catalyzes the oxidative ring cleavage of the aromatic ring of homogentisate to yield maleylacetoacetate. The protein is Homogentisate 1,2-dioxygenase of Xanthomonas oryzae pv. oryzae (strain MAFF 311018).